The sequence spans 384 residues: Putative dioxygenase SSO1533 (384 aa).

Residues histidine 296, glutamate 302, and histidine 332 each contribute to the Fe cation site.

Belongs to the homogentisate dioxygenase family. Fe cation serves as cofactor.

This chain is Putative dioxygenase SSO1533, found in Saccharolobus solfataricus (strain ATCC 35092 / DSM 1617 / JCM 11322 / P2) (Sulfolobus solfataricus).